Here is a 414-residue protein sequence, read N- to C-terminus: Serine hydroxymethyltransferase (414 aa).

Residues leucine 118 and 122-124 (GHL) contribute to the (6S)-5,6,7,8-tetrahydrofolate site. An N6-(pyridoxal phosphate)lysine modification is found at lysine 227. Residues glutamate 240 and 350 to 352 (SPF) each bind (6S)-5,6,7,8-tetrahydrofolate.

This sequence belongs to the SHMT family. Homodimer. Pyridoxal 5'-phosphate is required as a cofactor.

The protein resides in the cytoplasm. The catalysed reaction is (6R)-5,10-methylene-5,6,7,8-tetrahydrofolate + glycine + H2O = (6S)-5,6,7,8-tetrahydrofolate + L-serine. Its pathway is one-carbon metabolism; tetrahydrofolate interconversion. It functions in the pathway amino-acid biosynthesis; glycine biosynthesis; glycine from L-serine: step 1/1. Catalyzes the reversible interconversion of serine and glycine with tetrahydrofolate (THF) serving as the one-carbon carrier. This reaction serves as the major source of one-carbon groups required for the biosynthesis of purines, thymidylate, methionine, and other important biomolecules. Also exhibits THF-independent aldolase activity toward beta-hydroxyamino acids, producing glycine and aldehydes, via a retro-aldol mechanism. The sequence is that of Serine hydroxymethyltransferase from Bacillus thuringiensis (strain Al Hakam).